A 731-amino-acid polypeptide reads, in one-letter code: Catalase-peroxidase (731 aa).

Residues W98–Y226 constitute a cross-link (tryptophyl-tyrosyl-methioninium (Trp-Tyr) (with M-252)). H99 acts as the Proton acceptor in catalysis. The tryptophyl-tyrosyl-methioninium (Tyr-Met) (with W-98) cross-link spans Y226–M252. H267 is a heme b binding site.

The protein belongs to the peroxidase family. Peroxidase/catalase subfamily. Homodimer or homotetramer. Heme b is required as a cofactor. Formation of the three residue Trp-Tyr-Met cross-link is important for the catalase, but not the peroxidase activity of the enzyme.

The catalysed reaction is H2O2 + AH2 = A + 2 H2O. It carries out the reaction 2 H2O2 = O2 + 2 H2O. In terms of biological role, bifunctional enzyme with both catalase and broad-spectrum peroxidase activity. The chain is Catalase-peroxidase from Ruegeria pomeroyi (strain ATCC 700808 / DSM 15171 / DSS-3) (Silicibacter pomeroyi).